The chain runs to 643 residues: Threonine--tRNA ligase (643 aa).

The 61-residue stretch at 1-61 (MPIITLPDGS…EQDATLEIIT (61 aa)) folds into the TGS domain. Positions 243–534 (DHRKIGKALD…ITEEYAGFFP (292 aa)) are catalytic. Residues Cys334, His385, and His511 each coordinate Zn(2+).

It belongs to the class-II aminoacyl-tRNA synthetase family. As to quaternary structure, homodimer. The cofactor is Zn(2+).

The protein resides in the cytoplasm. The catalysed reaction is tRNA(Thr) + L-threonine + ATP = L-threonyl-tRNA(Thr) + AMP + diphosphate + H(+). Catalyzes the attachment of threonine to tRNA(Thr) in a two-step reaction: L-threonine is first activated by ATP to form Thr-AMP and then transferred to the acceptor end of tRNA(Thr). Also edits incorrectly charged L-seryl-tRNA(Thr). The sequence is that of Threonine--tRNA ligase from Haemophilus influenzae (strain 86-028NP).